Consider the following 47-residue polypeptide: Potassium channel toxin TcoKIK (47 aa).

Residues 14 to 47 (EYACPAIDKFCEDHCAAKKAVGKCDDFKCNCIKL) enclose the BetaSPN-type CS-alpha/beta domain. Disulfide bonds link Cys-17-Cys-37, Cys-24-Cys-42, and Cys-28-Cys-44.

It belongs to the long chain scorpion toxin family. Class 2 subfamily. As to expression, expressed by the venom gland.

It is found in the secreted. Its subcellular location is the target cell membrane. Its function is as follows. Blocks voltage-gated potassium channels. Its application (10 uM) to cells recombinantly expressing channels results in membrane damage and cell lysis. The protein is Potassium channel toxin TcoKIK of Tityus costatus (Brazilian scorpion).